Consider the following 117-residue polypeptide: Ribosome-binding factor A (117 aa).

Belongs to the RbfA family. In terms of assembly, monomer. Binds 30S ribosomal subunits, but not 50S ribosomal subunits or 70S ribosomes.

Its subcellular location is the cytoplasm. In terms of biological role, one of several proteins that assist in the late maturation steps of the functional core of the 30S ribosomal subunit. Associates with free 30S ribosomal subunits (but not with 30S subunits that are part of 70S ribosomes or polysomes). Required for efficient processing of 16S rRNA. May interact with the 5'-terminal helix region of 16S rRNA. The sequence is that of Ribosome-binding factor A from Lacticaseibacillus casei (strain BL23) (Lactobacillus casei).